An 84-amino-acid chain; its full sequence is Small ribosomal subunit protein uS17 (84 aa).

The protein belongs to the universal ribosomal protein uS17 family. Part of the 30S ribosomal subunit.

In terms of biological role, one of the primary rRNA binding proteins, it binds specifically to the 5'-end of 16S ribosomal RNA. This is Small ribosomal subunit protein uS17 from Clostridium perfringens (strain ATCC 13124 / DSM 756 / JCM 1290 / NCIMB 6125 / NCTC 8237 / Type A).